Consider the following 300-residue polypeptide: Iron-dependent extradiol dioxygenase (300 aa).

VOC domains lie at 5 to 120 and 142 to 270; these read SLGY…VFHG and GMGH…FGCE. His-145 contributes to the Fe cation binding site. The substrate site is built by His-200, His-215, Asp-250, and Tyr-256. His-215 lines the Fe cation pocket. Glu-266 is a Fe cation binding site.

It belongs to the extradiol ring-cleavage dioxygenase family. As to quaternary structure, homodimer, but may form a homooctamer. Fe(2+) serves as cofactor.

It carries out the reaction 3,4-dihydroxy-9,10-secoandrosta-1,3,5(10)-triene-9,17-dione + O2 = (1E,2Z)-3-hydroxy-5,9,17-trioxo-4,5:9,10-disecoandrosta-1(10),2-dien-4-oate + H(+). Its pathway is steroid metabolism; cholesterol metabolism. Its function is as follows. Catalyzes the meta-cleavage of 3,4-dihydroxy-9,10-seconandrost-1,3,5(10)-triene-9,17-dione (3,4-DHSA) to produce 4,5-9,10-diseco-3-hydroxy-5,9,17-trioxoandrosta-1(10),2-diene-4-oic acid (4,9-DSHA). In Mycobacterium tuberculosis (strain CDC 1551 / Oshkosh), this protein is Iron-dependent extradiol dioxygenase (hsaC).